The following is a 335-amino-acid chain: Probable peptide ABC transporter ATP-binding protein y4tR (335 aa).

Residues 15–264 (VRDLETHFYG…PTHPYTRALM (250 aa)) enclose the ABC transporter domain. 49–56 (GESGCGKS) contributes to the ATP binding site.

It belongs to the ABC transporter superfamily.

It localises to the cell inner membrane. Probably part of a binding-protein-dependent transport system y4tOPQRS for a peptide. Probably responsible for energy coupling to the transport system. The polypeptide is Probable peptide ABC transporter ATP-binding protein y4tR (Sinorhizobium fredii (strain NBRC 101917 / NGR234)).